We begin with the raw amino-acid sequence, 474 residues long: Phenolic acid decarboxylase (474 aa).

Positions 161, 182, and 224 each coordinate Mn(2+). Prenylated FMN contacts are provided by residues 161-166 and 181-182; these read NVGTYR and MH. Catalysis depends on Glu-273, which acts as the Proton donor.

It belongs to the UbiD family. YclC subfamily. Requires prenylated FMN as cofactor. It depends on Mn(2+) as a cofactor.

The enzyme catalyses vanillate + H(+) = guaiacol + CO2. In terms of biological role, involved in the non-oxidative decarboxylation and detoxification of phenolic derivatives under both aerobic and anaerobic conditions. Phenolic acid decarboxylase that catalyzes the reversible decarboxylation of vanillate. In Streptomyces sp. (strain D7), this protein is Phenolic acid decarboxylase.